Consider the following 133-residue polypeptide: uncharacterized protein (133 aa).

The disordered stretch occupies residues 107–133 (TSHHRAAGLQSQHAPGSGRVRITGGKV).

This is an uncharacterized protein from Homo sapiens (Human).